A 324-amino-acid polypeptide reads, in one-letter code: Casein kinase I (324 aa).

One can recognise a Protein kinase domain in the interval 9–278; that stretch reads YALGKKLGSG…LRRLLKDLFI (270 aa). Residues 15–23 and lysine 38 each bind ATP; that span reads LGSGSFGDI. Catalysis depends on aspartate 128, which acts as the Proton acceptor.

The protein belongs to the protein kinase superfamily. CK1 Ser/Thr protein kinase family. Casein kinase I subfamily. In terms of assembly, interacts with rhoptry protein RON3; the interaction is direct. Interacts with CK2alpha; the interaction is direct. Interacts with nucleosome assembly protein NAPL. Interacts with RAB5b. Interacts with host GAPVD1. Interacts with host SNX22. It depends on Mg(2+) as a cofactor.

The protein resides in the cytoplasm. The protein localises to the cytoplasmic vesicle. It is found in the secretory vesicle. It localises to the microneme. Its subcellular location is the secreted. The protein resides in the host cell surface. The enzyme catalyses L-seryl-[protein] + ATP = O-phospho-L-seryl-[protein] + ADP + H(+). It catalyses the reaction L-threonyl-[protein] + ATP = O-phospho-L-threonyl-[protein] + ADP + H(+). Functionally, serine/threonine-protein kinase likely to be involved in many cellular processes. Phosphorylates rhoptry protein RON3, nucleosome assembly protein NAPL and DNA/RNA-binding protein ALBA4 in vitro. The chain is Casein kinase I from Plasmodium falciparum (isolate Dd2).